A 396-amino-acid polypeptide reads, in one-letter code: Acetate kinase (396 aa).

Residue Asn-7 coordinates Mg(2+). An ATP-binding site is contributed by Lys-14. Arg-89 provides a ligand contact to substrate. Asp-146 (proton donor/acceptor) is an active-site residue. ATP is bound by residues 206 to 210, 280 to 282, and 328 to 332; these read HLGNG, DLR, and GIGEN. A Mg(2+)-binding site is contributed by Glu-382.

This sequence belongs to the acetokinase family. As to quaternary structure, homodimer. The cofactor is Mg(2+). Mn(2+) serves as cofactor.

The protein resides in the cytoplasm. It carries out the reaction acetate + ATP = acetyl phosphate + ADP. It functions in the pathway metabolic intermediate biosynthesis; acetyl-CoA biosynthesis; acetyl-CoA from acetate: step 1/2. Functionally, catalyzes the formation of acetyl phosphate from acetate and ATP. Can also catalyze the reverse reaction. This Maridesulfovibrio salexigens (strain ATCC 14822 / DSM 2638 / NCIMB 8403 / VKM B-1763) (Desulfovibrio salexigens) protein is Acetate kinase.